A 267-amino-acid chain; its full sequence is Eukaryotic translation initiation factor 3 subunit K (267 aa).

The 188-residue stretch at 46–233 folds into the PCI domain; the sequence is FDCYANLALL…EARSEVKSER (188 aa).

Belongs to the eIF-3 subunit K family. As to quaternary structure, component of the eukaryotic translation initiation factor 3 (eIF-3) complex.

Its subcellular location is the cytoplasm. Functionally, component of the eukaryotic translation initiation factor 3 (eIF-3) complex, which is involved in protein synthesis of a specialized repertoire of mRNAs and, together with other initiation factors, stimulates binding of mRNA and methionyl-tRNAi to the 40S ribosome. The eIF-3 complex specifically targets and initiates translation of a subset of mRNAs involved in cell proliferation. The polypeptide is Eukaryotic translation initiation factor 3 subunit K (Aspergillus niger (strain ATCC MYA-4892 / CBS 513.88 / FGSC A1513)).